Consider the following 416-residue polypeptide: E3 ubiquitin-protein ligase makorin-2 (416 aa).

2 consecutive C3H1-type zinc fingers follow at residues 2 to 29 (STKQ…HDLA) and 31 to 58 (SKPS…HTKP). The disordered stretch occupies residues 61–144 (AAGGAVGPAP…DPQTSPEMKP (84 aa)). The segment covering 95 to 123 (HSNEPGKREKKTLVLRDRNLTGLAEDKTP) has biased composition (basic and acidic residues). Residue Ser139 is modified to Phosphoserine. A C3H1-type 3 zinc finger spans residues 165-192 (SNEPQLCPYAAAGECRFGDACVYLHGDM). The tract at residues 193–222 (CEICRLQVLHPFDPEQRKAHEKMCMSTFEH) is makorin-type Cys-His. The segment at 238 to 292 (CSICMEVILEKASASERRFGILSNCSHTYCLSCIRQWRCAKQFENPIIKSCPECR) adopts an RING-type zinc-finger fold. The C3H1-type 4 zinc finger occupies 321 to 350 (GMGKKACKYFEQGKGTCPFGSKCLYRHAYP).

In terms of assembly, interacts with PDLIM2 (via LIM zinc-binding domain). Interacts with RELA. In terms of tissue distribution, highly expressed in the testis, and lower expression in the brain, thymus, heart, lung, liver, spleen, kidney, ovary, uterus, and seminal vesicle (at protein level). Expressed in primary immune cells, such as CD4-positive and CD8-positive T cells, CD19-positive B cells and CD11c-positive dendritic cells, and in embryonic fibroblasts (at protein level).

The protein resides in the cytoplasm. It localises to the nucleus. It catalyses the reaction S-ubiquitinyl-[E2 ubiquitin-conjugating enzyme]-L-cysteine + [acceptor protein]-L-lysine = [E2 ubiquitin-conjugating enzyme]-L-cysteine + N(6)-ubiquitinyl-[acceptor protein]-L-lysine.. It functions in the pathway protein modification; protein ubiquitination. Its function is as follows. E3 ubiquitin ligase catalyzing the covalent attachment of ubiquitin moieties onto substrate proteins. Promotes the polyubiquitination and proteasome-dependent degradation of RELA/p65, thereby suppressing RELA-mediated NF-kappa-B transactivation and negatively regulating inflammatory responses. Plays a role in the regulation of spermiation and in male fertility. In Mus musculus (Mouse), this protein is E3 ubiquitin-protein ligase makorin-2 (Mkrn2).